We begin with the raw amino-acid sequence, 614 residues long: Acetylcholinesterase (614 aa).

Positions 1–31 are cleaved as a signal peptide; it reads MRPPWYPLHTPSLASPLLFLLLSLLGGGARA. Cys-100 and Cys-127 are disulfide-bonded. Ser-234 acts as the Acyl-ester intermediate in catalysis. An intrachain disulfide couples Cys-288 to Cys-303. Asn-296 is a glycosylation site (N-linked (GlcNAc...) asparagine). Glu-365 (charge relay system) is an active-site residue. N-linked (GlcNAc...) asparagine glycosylation is present at Asn-381. The cysteines at positions 440 and 560 are disulfide-linked. His-478 (charge relay system) is an active-site residue. Asn-495 is a glycosylation site (N-linked (GlcNAc...) asparagine).

This sequence belongs to the type-B carboxylesterase/lipase family. Homotetramer; composed of disulfide-linked homodimers. Catalytic forms H (GPI-anchor dimer) and T (asymmetric collagen-tailed), which differ in their C-terminus, account for all types of known ACHE forms. Interacts with PRIMA1. The interaction with PRIMA1 is required to anchor it to the basal lamina of cells and organize into tetramers. Has been found in central nervous system and muscle. Found in embryonic liver and spleen but not in adult liver.

It is found in the synapse. It localises to the secreted. The protein localises to the cell membrane. It carries out the reaction acetylcholine + H2O = choline + acetate + H(+). Terminates signal transduction at the neuromuscular junction by rapid hydrolysis of the acetylcholine released into the synaptic cleft. This chain is Acetylcholinesterase (Ache), found in Rattus norvegicus (Rat).